The sequence spans 47 residues: PhoP/PhoQ regulator MgrB (47 aa).

A helical transmembrane segment spans residues 6–26; sequence WVLLIVIIAGCLLLWTQMLNV.

The protein belongs to the MgrB family. May form homooligomers. Probably interacts with the periplasmic domain of PhoQ.

The protein localises to the cell inner membrane. In terms of biological role, phoP-regulated transcription is redox-sensitive, being activated when the periplasm becomes more reducing. MgrB acts between DsbA/DsbB and PhoP/PhoQ in this pathway. Represses PhoP/PhoQ signaling, possibly by binding to the periplasmic domain of PhoQ, altering its activity and that of downstream effector PhoP. The protein is PhoP/PhoQ regulator MgrB of Klebsiella pneumoniae (strain 342).